Here is a 597-residue protein sequence, read N- to C-terminus: uncharacterized protein (597 aa).

In terms of domain architecture, VWFA spans 378 to 575 (EVSFVVDNSG…YLPRELLRTL (198 aa)).

This is an uncharacterized protein from Treponema pallidum (strain Nichols).